Consider the following 472-residue polypeptide: MNAVTDKSVADYIVADMALAGWGRRELAIAETEMPGLMAIRDEYAASQPLKGARIAGSLHMTIQTGVLIETLVALGAEVRWASCNIFSTQDHAAAAIAATGTPVFAIKGETLEEYWQYTHKIFEWPEGRHANMILDDGGDATLLLHLGARAEQDISVLAKPGSEEERVLFAAIKETLARDPKWYSTRLAQIKGVTEETTTGVHRLYQMSQKGELAFAAINVNDSVTKSKFDNLYGCRESLVDGIKRATDVMVAGKIAVVAGYGDVGKGCAQALAALRAQVWVTEIDPICALQAAMEGFKVVTMEEAAAHADIFVTATGNYHVITRQHMEAMKDQAIVCNIGHFDNEIDVAGLENCQWEEIKPQVDHVIFPDGKRIILLAKGRLVNLGCATGHPSFVMSSSFANQTIAQIELFTRNEAYTTGQVYVLPKHLDEKVARLHLKKLGAKLSTLSKQQADYIGVPVEGPFKPGHYRY.

Substrate is bound by residues T62, D137, and E197. 198–200 (TTT) serves as a coordination point for NAD(+). 2 residues coordinate substrate: K227 and D231. Residues N232, 261–266 (GYGDVG), E284, N319, 340–342 (IGH), and N385 each bind NAD(+).

It belongs to the adenosylhomocysteinase family. It depends on NAD(+) as a cofactor.

It is found in the cytoplasm. The enzyme catalyses S-adenosyl-L-homocysteine + H2O = L-homocysteine + adenosine. Its pathway is amino-acid biosynthesis; L-homocysteine biosynthesis; L-homocysteine from S-adenosyl-L-homocysteine: step 1/1. Functionally, may play a key role in the regulation of the intracellular concentration of adenosylhomocysteine. This Bordetella bronchiseptica (strain ATCC BAA-588 / NCTC 13252 / RB50) (Alcaligenes bronchisepticus) protein is Adenosylhomocysteinase.